A 510-amino-acid chain; its full sequence is Dermokine (510 aa).

An N-terminal signal peptide occupies residues 1-21; it reads MKLKGSLACLLLFLLLGSGEA. The segment at 117 to 362 is disordered; that stretch reads VDPAHKSWQG…SSGEGEAVSG (246 aa). Polar residues predominate over residues 124-137; sequence WQGTPGSNGAWGTN. Positions 141 to 158 are enriched in gly residues; sequence PSGGHGIPGSQGSSGGPG. The span at 194-221 shows a compositional bias: polar residues; the sequence is GANSQGTSPQPGSVRSNNNRNTECTTPP. Gly residues-rich tracts occupy residues 222–231, 240–254, and 264–292; these read GSGGSSGNSG, TNGG…GGSN, and SNGG…GGSN. Composition is skewed to low complexity over residues 293 to 303 and 319 to 332; these read AGSSGSSGSSS and PSPS…SGVR. Residues 344–355 show a composition bias toward gly residues; it reads GGSGGQGQGSSG.

This sequence belongs to the dermokine family. As to quaternary structure, homooligomer. Seems to be able to homodimerize and homotrimerize. O-glycosylated.

It localises to the secreted. Its function is as follows. May act as a soluble regulator of keratinocyte differentiation. The polypeptide is Dermokine (DMKN) (Bos taurus (Bovine)).